The primary structure comprises 942 residues: Alpha,alpha-trehalose-phosphate synthase [UDP-forming] 1 (942 aa).

Residues 28-57 (REKRKSNRARNPNDVAGSSENSENDLRLEG) form a disordered region. Residues 92 to 559 (QRLLVVANRL…AETFVSELND (468 aa)) are glycosyltransferase. Positions 815 to 892 (DMPAIARSRP…LGNSRRPSPE (78 aa)) are disordered. Low complexity-rich tracts occupy residues 821-833 (RSRP…AKSS) and 841-867 (SKST…NKSS). The span at 879–888 (SNHSLGNSRR) shows a compositional bias: polar residues.

In the N-terminal section; belongs to the glycosyltransferase 20 family. It in the C-terminal section; belongs to the trehalose phosphatase family. As to expression, expressed in seedlings, leaves, roots, stems, flowers and siliques.

The protein resides in the vacuole. It localises to the secreted. It is found in the cell wall. Its subcellular location is the cytoplasm. The catalysed reaction is D-glucose 6-phosphate + UDP-alpha-D-glucose = alpha,alpha-trehalose 6-phosphate + UDP + H(+). Its function is as follows. Required for normal embryo development, vegetative growth and transition to flowering. Regulates embryo growth, cell wall deposition, starch and sucrose degradation, but not cell differentiation. Involved in the regulation of glucose sensing and signaling genes during plant development. The polypeptide is Alpha,alpha-trehalose-phosphate synthase [UDP-forming] 1 (Arabidopsis thaliana (Mouse-ear cress)).